A 287-amino-acid chain; its full sequence is Pyridoxal 5'-phosphate synthase subunit PdxS (287 aa).

D-ribose 5-phosphate is bound at residue Asp21. The active-site Schiff-base intermediate with D-ribose 5-phosphate is Lys78. Gly150 is a binding site for D-ribose 5-phosphate. Arg162 provides a ligand contact to D-glyceraldehyde 3-phosphate. D-ribose 5-phosphate contacts are provided by residues Gly211 and 232–233 (GS).

It belongs to the PdxS/SNZ family. In the presence of PdxT, forms a dodecamer of heterodimers.

The enzyme catalyses aldehydo-D-ribose 5-phosphate + D-glyceraldehyde 3-phosphate + L-glutamine = pyridoxal 5'-phosphate + L-glutamate + phosphate + 3 H2O + H(+). Its pathway is cofactor biosynthesis; pyridoxal 5'-phosphate biosynthesis. Catalyzes the formation of pyridoxal 5'-phosphate from ribose 5-phosphate (RBP), glyceraldehyde 3-phosphate (G3P) and ammonia. The ammonia is provided by the PdxT subunit. Can also use ribulose 5-phosphate and dihydroxyacetone phosphate as substrates, resulting from enzyme-catalyzed isomerization of RBP and G3P, respectively. The chain is Pyridoxal 5'-phosphate synthase subunit PdxS from Tropheryma whipplei (strain Twist) (Whipple's bacillus).